The sequence spans 110 residues: uncharacterized protein (110 aa).

This is an uncharacterized protein from Sulfolobus islandicus rod-shaped virus 1 (SIRV-1).